The sequence spans 155 residues: Interleukin-2 (155 aa).

The first 20 residues, 1 to 20 (MYKIQLLSCIALTLALVANG), serve as a signal peptide directing secretion. Threonine 23 carries an O-linked (GalNAc...) threonine glycan. A disulfide bridge connects residues cysteine 79 and cysteine 127.

The protein belongs to the IL-2 family.

It localises to the secreted. Functionally, cytokine produced by activated CD4-positive helper T-cells and to a lesser extend activated CD8-positive T-cells and natural killer (NK) cells that plays pivotal roles in the immune response and tolerance. Binds to a receptor complex composed of either the high-affinity trimeric IL-2R (IL2RA/CD25, IL2RB/CD122 and IL2RG/CD132) or the low-affinity dimeric IL-2R (IL2RB and IL2RG). Interaction with the receptor leads to oligomerization and conformation changes in the IL-2R subunits resulting in downstream signaling starting with phosphorylation of JAK1 and JAK3. In turn, JAK1 and JAK3 phosphorylate the receptor to form a docking site leading to the phosphorylation of several substrates including STAT5. This process leads to activation of several pathways including STAT, phosphoinositide-3-kinase/PI3K and mitogen-activated protein kinase/MAPK pathways. Functions as a T-cell growth factor and can increase NK-cell cytolytic activity as well. Promotes strong proliferation of activated B-cells and subsequently immunoglobulin production. Plays a pivotal role in regulating the adaptive immune system by controlling the survival and proliferation of regulatory T-cells, which are required for the maintenance of immune tolerance. Moreover, participates in the differentiation and homeostasis of effector T-cell subsets, including Th1, Th2, Th17 as well as memory CD8-positive T-cells. The polypeptide is Interleukin-2 (IL2) (Boselaphus tragocamelus (Nilgai)).